The primary structure comprises 328 residues: Protein FAM76B (328 aa).

The disordered stretch occupies residues 143 to 232 (KEQRKGLGSS…ITQSMDSGGT (90 aa)). The segment covering 148–159 (GLGSSHSNSSSL) has biased composition (low complexity). A compositionally biased stretch (basic residues) spans 165–183 (QRHHHHHQHHRHGSSHHKI). A compositionally biased stretch (polar residues) spans 185-201 (GNLSPEQDQGLWKQSIQ). Ser188 carries the post-translational modification Phosphoserine. Basic and acidic residues predominate over residues 203–213 (ETPKKKPKLET). The segment covering 216-232 (SNGDSSSITQSMDSGGT) has biased composition (polar residues). Residues 237-316 (LISQLKEEVM…KQVAALSKGK (80 aa)) adopt a coiled-coil conformation.

This sequence belongs to the FAM76 family. As to expression, highly expressed in hematopoietic and immune systems including in the thymus, spleen, kidney, and blood vessel.

Its function is as follows. Plays a role in hematopoiesis and immune system development, and participates in the inflammatory response. The polypeptide is Protein FAM76B (fam76b) (Danio rerio (Zebrafish)).